The chain runs to 158 residues: Snaclec stejaggregin-A subunit alpha (158 aa).

The N-terminal stretch at 1–23 (MGRFISVSFGLLVVFLSLSGTGA) is a signal peptide. Intrachain disulfides connect C27/C38, C55/C152, and C127/C144. Positions 34–153 (YDWYCYKPFN…CQAKNPFVCK (120 aa)) constitute a C-type lectin domain.

This sequence belongs to the snaclec family. Heteromultimer; disulfide-linked. As to expression, expressed by the venom gland.

Its subcellular location is the secreted. Functionally, interferes with one step of hemostasis (modulation of platelet aggregation, or coagulation cascade, for example). In Trimeresurus stejnegeri (Chinese green tree viper), this protein is Snaclec stejaggregin-A subunit alpha.